Reading from the N-terminus, the 129-residue chain is HTH-type transcriptional regulator HmrR (129 aa).

The region spanning 1–68 (MNIGEASERS…VEECRQLLAL (68 aa)) is the HTH merR-type domain. Positions 4 to 23 (GEASERSGLPSKTIRYYEDI) form a DNA-binding region, H-T-H motif.

Homodimer.

The protein localises to the cytoplasm. Functionally, regulates the transcription of actP. It detects cytoplasmic copper stress and activates transcription in response to increasing copper concentrations. In the absence of copper, it negatively regulates the transcription of actP. This Rhizobium leguminosarum bv. viciae protein is HTH-type transcriptional regulator HmrR (hmrR).